A 334-amino-acid polypeptide reads, in one-letter code: Succinate receptor 1 (334 aa).

Residues 5–31 (MAWNATCKNWLAAEAALEKYYLSIFYG) are Extracellular-facing. Asparagine 8 is a glycosylation site (N-linked (GlcNAc...) asparagine). The helical transmembrane segment at 32–52 (IEFVVGVLGNTIVVYGYIFSL) threads the bilayer. Residues 53–59 (KNWNSSN) lie on the Cytoplasmic side of the membrane. The helical transmembrane segment at 60–80 (IYLFNLSVSDLAFLCTLPMLI) threads the bilayer. Topologically, residues 81–103 (RSYANGNWIYGDVLCISNRYVLH) are extracellular. A disulfide bridge connects residues cysteine 95 and cysteine 172. The helical transmembrane segment at 104–124 (ANLYTSILFLTFISIDRYLII) threads the bilayer. At 125 to 137 (KYPFREHLLQKKE) the chain is on the cytoplasmic side. Residues 138–158 (FAILISLAIWVLVTLELLPIL) form a helical membrane-spanning segment. Over 159-185 (PLINPVITDNGTTCNDFASSGDPNYNL) the chain is Extracellular. N-linked (GlcNAc...) asparagine glycosylation occurs at asparagine 168. Residues 186–206 (IYSMCLTLLGFLIPLFVMCFF) form a helical membrane-spanning segment. Residues 207 to 230 (YYKIALFLKQRNRQVATALPLEKP) lie on the Cytoplasmic side of the membrane. The chain crosses the membrane as a helical span at residues 231 to 251 (LNLVIMAVVIFSVLFTPYHVM). The Extracellular segment spans residues 252-281 (RNVRIASRLGSWKQYQCTQVVINSFYIVTR). The chain crosses the membrane as a helical span at residues 282–302 (PLAFLNSVINPVFYFLLGDHF). At 303-334 (RDMLMNQLRHNFKSLTSFSRWAHELLLSFREK) the chain is on the cytoplasmic side.

It belongs to the G-protein coupled receptor 1 family. Expressed specifically in kidney. Highly expressed in immature dendritic cells, expression rapidly downregulates after maturation. Also expressed in macrophages.

The protein resides in the cell membrane. Functionally, g protein-coupled receptor for succinate able to mediate signaling through Gq/GNAQ or Gi/GNAI second messengers depending on the cell type and the processes regulated. Succinate-SUCNR1 signaling serves as a link between metabolic stress, inflammation and energy homeostasis. In macrophages, plays a range of immune-regulatory roles. During inflammation, succinate-SUCNR1 signaling may act as an anti-inflammatory mediator or boost inflammation depending on the inflammatory status of cells. Hyperpolarizes M2 macrophages versus M1 phenotype through Gq signaling by regulating the transcription of genes involved in immune function. In activated M1 macrophages, plays a pro-inflammatory role in response to LPS. Expressed in dendritic cells, where it is involved in the sensing of immunological danger and enhances immunity. Mediates succinate triggered intracelleular calcium mobilization, induces migratory responses and acts in synergy with Toll-like receptor ligands for the production of proinflammatory cytokines as well as an enhancement of antigen-specific activation of helper T cells. In the small intestine, mediates the activation of tuft cells by dietary succinate and triggers type 2 immunity. In adipocytes, plays an important role in the control of energy metabolism. In response to succinate, controls leptin expression in an AMPK-JNK-CEBPA-dependent as well as circadian clock-regulated manner. In muscle tissue, is expressed in non-muscle cells and coordinates muscle remodeling in response to the succinate produced during exercise training in a paracrine manner. In retina, acts as a mediator of vessel growth during retinal development. In response to succinate, regulates the production of angiogenic factors, including VEGF, by retinal ganglion neurons. This chain is Succinate receptor 1, found in Homo sapiens (Human).